A 169-amino-acid chain; its full sequence is Peptide methionine sulfoxide reductase MsrA (169 aa).

The active site involves cysteine 10.

Belongs to the MsrA Met sulfoxide reductase family.

It catalyses the reaction L-methionyl-[protein] + [thioredoxin]-disulfide + H2O = L-methionyl-(S)-S-oxide-[protein] + [thioredoxin]-dithiol. It carries out the reaction [thioredoxin]-disulfide + L-methionine + H2O = L-methionine (S)-S-oxide + [thioredoxin]-dithiol. Its function is as follows. Has an important function as a repair enzyme for proteins that have been inactivated by oxidation. Catalyzes the reversible oxidation-reduction of methionine sulfoxide in proteins to methionine. This chain is Peptide methionine sulfoxide reductase MsrA, found in Streptococcus agalactiae serotype Ia (strain ATCC 27591 / A909 / CDC SS700).